We begin with the raw amino-acid sequence, 331 residues long: Ketol-acid reductoisomerase (NADP(+)) (331 aa).

Residues 2–182 (AKMYYDKDAD…GGTRAGVIET (181 aa)) form the KARI N-terminal Rossmann domain. NADP(+)-binding positions include 25–28 (FGSQ), serine 51, serine 53, and 83–86 (DEKQ). Histidine 108 is a catalytic residue. Glycine 134 provides a ligand contact to NADP(+). Positions 183–328 (TFKEETETDL…KGLREMMAWI (146 aa)) constitute a KARI C-terminal knotted domain. Mg(2+)-binding residues include aspartate 191, glutamate 195, glutamate 227, and glutamate 231. Residue serine 252 participates in substrate binding.

This sequence belongs to the ketol-acid reductoisomerase family. It depends on Mg(2+) as a cofactor.

It catalyses the reaction (2R)-2,3-dihydroxy-3-methylbutanoate + NADP(+) = (2S)-2-acetolactate + NADPH + H(+). The catalysed reaction is (2R,3R)-2,3-dihydroxy-3-methylpentanoate + NADP(+) = (S)-2-ethyl-2-hydroxy-3-oxobutanoate + NADPH + H(+). It participates in amino-acid biosynthesis; L-isoleucine biosynthesis; L-isoleucine from 2-oxobutanoate: step 2/4. The protein operates within amino-acid biosynthesis; L-valine biosynthesis; L-valine from pyruvate: step 2/4. In terms of biological role, involved in the biosynthesis of branched-chain amino acids (BCAA). Catalyzes an alkyl-migration followed by a ketol-acid reduction of (S)-2-acetolactate (S2AL) to yield (R)-2,3-dihydroxy-isovalerate. In the isomerase reaction, S2AL is rearranged via a Mg-dependent methyl migration to produce 3-hydroxy-3-methyl-2-ketobutyrate (HMKB). In the reductase reaction, this 2-ketoacid undergoes a metal-dependent reduction by NADPH to yield (R)-2,3-dihydroxy-isovalerate. This chain is Ketol-acid reductoisomerase (NADP(+)), found in Thermoanaerobacter sp. (strain X514).